Reading from the N-terminus, the 218-residue chain is Deoxyribose-phosphate aldolase (218 aa).

Aspartate 92 functions as the Proton donor/acceptor in the catalytic mechanism. Residue lysine 155 is the Schiff-base intermediate with acetaldehyde of the active site. The active-site Proton donor/acceptor is the lysine 184.

It belongs to the DeoC/FbaB aldolase family. DeoC type 1 subfamily.

It is found in the cytoplasm. The enzyme catalyses 2-deoxy-D-ribose 5-phosphate = D-glyceraldehyde 3-phosphate + acetaldehyde. Its pathway is carbohydrate degradation; 2-deoxy-D-ribose 1-phosphate degradation; D-glyceraldehyde 3-phosphate and acetaldehyde from 2-deoxy-alpha-D-ribose 1-phosphate: step 2/2. Its function is as follows. Catalyzes a reversible aldol reaction between acetaldehyde and D-glyceraldehyde 3-phosphate to generate 2-deoxy-D-ribose 5-phosphate. The chain is Deoxyribose-phosphate aldolase from Clostridium kluyveri (strain NBRC 12016).